We begin with the raw amino-acid sequence, 228 residues long: Putative N-acetylmannosamine-6-phosphate 2-epimerase (228 aa).

It belongs to the NanE family.

The enzyme catalyses an N-acyl-D-glucosamine 6-phosphate = an N-acyl-D-mannosamine 6-phosphate. Its pathway is amino-sugar metabolism; N-acetylneuraminate degradation; D-fructose 6-phosphate from N-acetylneuraminate: step 3/5. In terms of biological role, converts N-acetylmannosamine-6-phosphate (ManNAc-6-P) to N-acetylglucosamine-6-phosphate (GlcNAc-6-P). The chain is Putative N-acetylmannosamine-6-phosphate 2-epimerase from Lactiplantibacillus plantarum (strain ATCC BAA-793 / NCIMB 8826 / WCFS1) (Lactobacillus plantarum).